A 396-amino-acid polypeptide reads, in one-letter code: Ribosomal RNA large subunit methyltransferase I (396 aa).

In terms of domain architecture, PUA spans 2–81 (SVRLVLAKGR…ESIDIAFFSR (80 aa)).

Belongs to the methyltransferase superfamily. RlmI family.

Its subcellular location is the cytoplasm. It catalyses the reaction cytidine(1962) in 23S rRNA + S-adenosyl-L-methionine = 5-methylcytidine(1962) in 23S rRNA + S-adenosyl-L-homocysteine + H(+). Functionally, specifically methylates the cytosine at position 1962 (m5C1962) of 23S rRNA. The chain is Ribosomal RNA large subunit methyltransferase I from Escherichia coli O157:H7.